A 697-amino-acid polypeptide reads, in one-letter code: MAASGWNAVIPKTSSYDYITVSIQPAQQDNKKNLVIEFPPVSYFYGVYWTTDDMIIVRLPASTTSSQDLSKMVTITKLRWTFQNQKFTCSVGSDLAFRIIMTCNVGTMYFTATFLLNTLTSTGTKVYGMFNYVSLSSLVVVVTGNDAAHVEALIAVEGAAVRNQVAKLILWSVTETTNYLSFEKLISKAGKDVESGYYKGDTKTKRAIQALSISQGESWYYTELCTSSPLDVGGSGLAFFMRIRGVGLRSEAGVTPWKVSEIFKPLTSRLESDFSYSIHPEAQEDDSVVVHKAHLLAQNIIRDLGYKTVAELDTAEDSHLPVGSADCLAALLDLLYRRSEEMTLALNREYKPRRRRAAIAPQIQDPAVPAIQTYQNLVAGMLGELNKSQQEVLAFKGKFEQLERKVNNHLAVNPLTKLSRIKQRMDQFETSLAGVSSVVNEVQGLRNSHGQLSTEINRIKEAEGHFLNDLESVRRHLQGETGHLRSQLGNSLVTIFKPIIKMISRDIGMCLKVGSADQSQNDVVALSSRIDRLTQEVVALQNSEKPRLFYLHDKSEIKAAAGALEAVAAHVYLGWMSQRFICPPVLGTVYHHDRYIQGVYYKLVACTIEMVHLDKGTMILLIRDEILPVGVLHEVESNIVLDQCDHVPGIVRLSRDRVSPVDYIEVYEVVDPGVFTLSFSHVIAIYIPRCSGLRLLP.

Positions 516 to 545 (ADQSQNDVVALSSRIDRLTQEVVALQNSEK) form a coiled coil.

This is an uncharacterized protein from Callospermophilus lateralis (Golden-mantled ground squirrel).